A 216-amino-acid polypeptide reads, in one-letter code: Probable Golgi SNAP receptor complex member 2 (216 aa).

Residues 1–194 (MESLYHQTNN…IERRLVEDRR (194 aa)) are Cytoplasmic-facing. The stretch at 62-103 (QRQSSKLRVDQLKYDLRHLQTSLQTARERRQRRMQEISEREQ) forms a coiled coil. A helical; Anchor for type IV membrane protein transmembrane segment spans residues 195–215 (IFIGGVVVTLLIIALIIYFLV). Position 216 (Leu-216) is a topological domain, vesicular.

Belongs to the GOSR2 family. In terms of assembly, part of a unique SNARE complex.

The protein resides in the golgi apparatus. It localises to the cis-Golgi network membrane. The protein localises to the golgi apparatus membrane. It is found in the endoplasmic reticulum membrane. Involved in transport of proteins from the cis/medial-Golgi to the trans-Golgi network. The polypeptide is Probable Golgi SNAP receptor complex member 2 (Drosophila melanogaster (Fruit fly)).